Consider the following 352-residue polypeptide: DNA integrity scanning protein DisA (352 aa).

The DAC domain maps to 3–143; the sequence is DERIVLALKS…FKYSLSEVSV (141 aa). Residues Gly70, Leu88, and 101–105 contribute to the ATP site; that span reads IRHRT.

The protein belongs to the DisA family. Homooctamer. The cofactor is Mg(2+).

It catalyses the reaction 2 ATP = 3',3'-c-di-AMP + 2 diphosphate. Participates in a DNA-damage check-point that is active prior to asymmetric division when DNA is damaged. DisA forms globular foci that rapidly scan along the chromosomes during sporulation, searching for lesions. When a lesion is present, DisA pauses at the lesion site. This triggers a cellular response that culminates in a temporary block in sporulation initiation. Its function is as follows. Also has diadenylate cyclase activity, catalyzing the condensation of 2 ATP molecules into cyclic di-AMP (c-di-AMP). c-di-AMP acts as a signaling molecule that couples DNA integrity with progression of sporulation. The rise in c-di-AMP level generated by DisA while scanning the chromosome, operates as a positive signal that advances sporulation; upon encountering a lesion, the DisA focus arrests at the damaged site and halts c-di-AMP synthesis. The chain is DNA integrity scanning protein DisA from Carboxydothermus hydrogenoformans (strain ATCC BAA-161 / DSM 6008 / Z-2901).